The sequence spans 310 residues: Melanocyte-stimulating hormone receptor (310 aa).

Residues 1–37 are Extracellular-facing; the sequence is MPMQGAQRKLLGSLNSTPTATSNLGLAANRTGAPCLE. N-linked (GlcNAc...) asparagine glycosylation occurs at Asn-29. The chain crosses the membrane as a helical span at residues 38-63; sequence LPIPDGLFLSLGLVSLVENVLVVAAI. At 64–72 the chain is on the cytoplasmic side; the sequence is AKNRNLHSS. The chain crosses the membrane as a helical span at residues 73–93; the sequence is MYCFICCLALSDLLVSGSNML. At 94 to 110 the chain is on the extracellular side; that stretch reads EAGVLATRASVVQQLHN. The chain crosses the membrane as a helical span at residues 111–132; the sequence is TIDVLTCSSMLCSLCFLGAIAV. Over 133 to 155 the chain is Cytoplasmic; that stretch reads DRYISIFYALRYHSIMTLPRAQR. A helical membrane pass occupies residues 156–175; that stretch reads AVAAIWVASVLSSTLFITYY. Residues 176–183 are Extracellular-facing; it reads DHAAVLLC. Residues 184 to 203 form a helical membrane-spanning segment; sequence LVVFFLAMLVLMAVLYVHML. Topologically, residues 204–232 are cytoplasmic; the sequence is AWACQHAQGIIRLHKRQPPAHKGFGLRGA. A helical transmembrane segment spans residues 233–258; sequence ATLTILLGIFFLCWGPFFLRLTLVVF. The Extracellular portion of the chain corresponds to 259–271; it reads CPQHLTCNCIFKN. Residues 272–292 traverse the membrane as a helical segment; sequence FKVFLTLIICNTIIDPLIYAF. The Cytoplasmic portion of the chain corresponds to 293 to 310; that stretch reads RSQELRRTLKEVLGRGRW.

The protein belongs to the G-protein coupled receptor 1 family. As to quaternary structure, interacts with MGRN1, but does not undergo MGRN1-mediated ubiquitination; this interaction competes with GNAS-binding and thus inhibits agonist-induced cAMP production. Interacts with OPN3; the interaction results in a decrease in MC1R-mediated cAMP signaling and ultimately a decrease in melanin production in melanocytes.

The protein localises to the cell membrane. In terms of biological role, receptor for MSH (alpha, beta and gamma) and ACTH. The activity of this receptor is mediated by G proteins which activate adenylate cyclase. Mediates melanogenesis, the production of eumelanin (black/brown) and phaeomelanin (red/yellow), via regulation of cAMP signaling in melanocytes. In Leontopithecus chrysomelas (Golden-headed lion tamarin), this protein is Melanocyte-stimulating hormone receptor (MC1R).